We begin with the raw amino-acid sequence, 180 residues long: Nucleoside-triphosphatase THEP1 (180 aa).

ATP-binding positions include 9 to 16 and 99 to 106; these read GRPGIGKT and VVIVDEVG.

This sequence belongs to the THEP1 NTPase family.

The catalysed reaction is a ribonucleoside 5'-triphosphate + H2O = a ribonucleoside 5'-diphosphate + phosphate + H(+). Its function is as follows. Has nucleotide phosphatase activity towards ATP, GTP, CTP, TTP and UTP. May hydrolyze nucleoside diphosphates with lower efficiency. In Methanopyrus kandleri (strain AV19 / DSM 6324 / JCM 9639 / NBRC 100938), this protein is Nucleoside-triphosphatase THEP1.